Reading from the N-terminus, the 193-residue chain is Large ribosomal subunit protein eL19A (193 aa).

Positions 156–179 (QEQQDARRARAKAARQRRAKAVEE) are disordered. Basic residues predominate over residues 164–174 (ARAKAARQRRA).

It belongs to the eukaryotic ribosomal protein eL19 family. In terms of assembly, component of the large ribosomal subunit (LSU). Mature yeast ribosomes consist of a small (40S) and a large (60S) subunit. The 40S small subunit contains 1 molecule of ribosomal RNA (18S rRNA) and at least 33 different proteins. The large 60S subunit contains 3 rRNA molecules (25S, 5.8S and 5S rRNA) and at least 46 different proteins. eL19 lies in close proximity to the binding site for eukaryotic initiation factor eIF4G.

The protein localises to the cytoplasm. Component of the ribosome, a large ribonucleoprotein complex responsible for the synthesis of proteins in the cell. The small ribosomal subunit (SSU) binds messenger RNAs (mRNAs) and translates the encoded message by selecting cognate aminoacyl-transfer RNA (tRNA) molecules. The large subunit (LSU) contains the ribosomal catalytic site termed the peptidyl transferase center (PTC), which catalyzes the formation of peptide bonds, thereby polymerizing the amino acids delivered by tRNAs into a polypeptide chain. The nascent polypeptides leave the ribosome through a tunnel in the LSU and interact with protein factors that function in enzymatic processing, targeting, and the membrane insertion of nascent chains at the exit of the ribosomal tunnel. eL19 may play a role in the last stages of translation initiation, in particular subunit joining and shedding/releasing factors. This is Large ribosomal subunit protein eL19A (rpl1901) from Schizosaccharomyces pombe (strain 972 / ATCC 24843) (Fission yeast).